A 288-amino-acid polypeptide reads, in one-letter code: Energy-coupling factor transporter ATP-binding protein EcfA3 (288 aa).

The 243-residue stretch at 3–245 folds into the ABC transporter domain; it reads INFRNVSFSY…ESYLRKEKLR (243 aa). 40 to 47 is a binding site for ATP; that stretch reads GHTGSGKS.

Belongs to the ABC transporter superfamily. Energy-coupling factor EcfA family. In terms of assembly, forms a stable energy-coupling factor (ECF) transporter complex composed of 2 membrane-embedded substrate-binding proteins (S component), 2 ATP-binding proteins (A component) and 2 transmembrane proteins (T component).

The protein resides in the cell membrane. Functionally, ATP-binding (A) component of a common energy-coupling factor (ECF) ABC-transporter complex. Unlike classic ABC transporters this ECF transporter provides the energy necessary to transport a number of different substrates. The chain is Energy-coupling factor transporter ATP-binding protein EcfA3 from Oenococcus oeni (strain ATCC BAA-331 / PSU-1).